The sequence spans 379 residues: Phospholipase A1 (379 aa).

Residues 1–20 form the signal peptide; that stretch reads MKFITAILVIFCVYLLSTAG. The propeptide occupies 21–73; the sequence is DSKILPLKKLPSKIFGHLKSHVDNTVKKPLKVFGHLKSHVENSVGPLRMNKLT. An intrachain disulfide couples C76 to C154. N126 is a glycosylation site (N-linked (GlcNAc...) asparagine). S204 functions as the Nucleophile in the catalytic mechanism. The active-site Charge relay system is D232. 2 disulfide bridges follow: C243–C248 and C285–C291. The active-site Charge relay system is H293.

The protein belongs to the AB hydrolase superfamily. Lipase family. Contains five disulfide bonds. As to expression, expressed by the venom gland.

The protein resides in the secreted. The catalysed reaction is a 1,2-diacyl-sn-glycero-3-phosphocholine + H2O = a 2-acyl-sn-glycero-3-phosphocholine + a fatty acid + H(+). Functionally, catalyzes the hydrolysis of phosphatidylcholine with phospholipase A1 activity. May act as an allergen and induce hemolytic activity. The chain is Phospholipase A1 from Dinoponera quadriceps (South American ant).